The chain runs to 343 residues: Vancomycin/teicoplanin A-type resistance protein VanA (343 aa).

ATP contacts are provided by residues lysine 133, 169–171 (FVK), 177–178 (SS), 207–214 (EQAVSGCE), and phenylalanine 241. Residues 137–338 (YIVAKNAGIA…LPELIDRLIV (202 aa)) form the ATP-grasp domain. Histidine 244 provides a ligand contact to substrate. 304–305 (NE) is a binding site for ATP. Residues glutamate 305 and asparagine 307 each coordinate Mg(2+).

Belongs to the D-alanine--D-alanine ligase family. The cofactor is Mg(2+). Mn(2+) serves as cofactor.

Its subcellular location is the cell membrane. The enzyme catalyses (R)-lactate + D-alanine + ATP = D-alanyl-(R)-lactate + ADP + phosphate. Required for high-level resistance to glycopeptide antibiotics. D-Ala--D-Ala ligase of altered specificity which catalyzes ester bond formation between D-Ala and various D-hydroxy acids; produces a peptidoglycan which does not terminate in D-alanine but in D-lactate, thus preventing vancomycin or teicoplanin binding. The chain is Vancomycin/teicoplanin A-type resistance protein VanA (vanA) from Enterococcus faecium (Streptococcus faecium).